The sequence spans 179 residues: NADH dehydrogenase [ubiquinone] 1 beta subcomplex subunit 9 (179 aa).

Ala-2 is subject to N-acetylalanine. Ser-85 bears the Phosphoserine mark. Positions 136-162 (EVKQLQEETPPGGPLTEALPPARKEGD) are disordered.

It belongs to the complex I LYR family. In terms of assembly, mammalian complex I is composed of 45 different subunits.

Its subcellular location is the mitochondrion inner membrane. Accessory subunit of the mitochondrial membrane respiratory chain NADH dehydrogenase (Complex I), that is believed to be not involved in catalysis. Complex I functions in the transfer of electrons from NADH to the respiratory chain. The immediate electron acceptor for the enzyme is believed to be ubiquinone. This is NADH dehydrogenase [ubiquinone] 1 beta subcomplex subunit 9 (NDUFB9) from Homo sapiens (Human).